Here is a 1927-residue protein sequence, read N- to C-terminus: Lactase/phlorizin hydrolase (1927 aa).

An N-terminal signal peptide occupies residues 1 to 19; the sequence is MELSWHVVFIALLSFSCWG. Residues 20 to 868 constitute a propeptide, XBetaGly; it reads SDWESDRNFI…NTVNLPSKVR (849 aa). Residues 20 to 1882 are Extracellular-facing; the sequence is SDWESDRNFI…LMLGTTEAQT (1863 aa). N-linked (GlcNAc...) asparagine glycosylation is present at Asn-42. The glycosyl hydrolase-1 1; Region I stretch occupies residues 44–286; sequence SGLLGDQSSN…FIFNLKLPDC (243 aa). The glycosyl hydrolase-1 2; Region II stretch occupies residues 362-855; it reads IWEAFANQSR…GFLTKGAKRL (494 aa). N-linked (GlcNAc...) asparagine glycosylation is found at Asn-368, Asn-418, Asn-512, Asn-821, Asn-934, Asn-946, and Asn-989. Positions 902 to 1366 are glycosyl hydrolase-1 3; Region III. Phlorizin hydrolase/glycosylceramidase activity; the sequence is TFRDDFLWGV…EVITNNGMPL (465 aa). The Proton donor; for phlorizin hydrolase/Glycosylceramidase activity role is filled by Glu-1065. An N-linked (GlcNAc...) asparagine glycan is attached at Asn-1174. Residues 1220–1244 form a disordered region; it reads RLNPPSYEDDQEMAEEEDPSWPSTA. A compositionally biased stretch (acidic residues) spans 1226-1238; sequence YEDDQEMAEEEDP. The Nucleophile; for phlorizin hydrolase/Glycosylceramidase activity role is filled by Glu-1273. N-linked (GlcNAc...) asparagine glycosylation is found at Asn-1340 and Asn-1508. The segment at 1373 to 1846 is glycosyl hydrolase-1 4; Region IV. Lactase activity; the sequence is LYGRFPEGFI…CNGFPDPATG (474 aa). Glu-1538 (proton donor; for lactase activity) is an active-site residue. Residues 1647 to 1927 are required for homodimerization and transport to the plasma membrane; sequence RDRSLAAGLN…QQELSPVSSF (281 aa). Asn-1656 and Asn-1672 each carry an N-linked (GlcNAc...) asparagine glycan. The active-site Nucleophile; for lactase activity is the Glu-1749. N-linked (GlcNAc...) asparagine glycosylation is found at Asn-1761 and Asn-1814. The helical transmembrane segment at 1883–1901 threads the bilayer; sequence ALYVLFSLVLLGVCGLAFL. At 1902–1927 the chain is on the cytoplasmic side; sequence SYKYCKRSKQGKTQRSQQELSPVSSF.

The protein belongs to the glycosyl hydrolase 1 family. Homodimer. Post-translationally, N-glycosylated. As to expression, specifically expressed in small intestine.

It localises to the apical cell membrane. It catalyses the reaction lactose + H2O = beta-D-galactose + D-glucose. It carries out the reaction phlorizin + H2O = phloretin + beta-D-glucose. The enzyme catalyses D-cellobiose + H2O = beta-D-glucose + D-glucose. The catalysed reaction is quercetin 4'-O-beta-D-glucoside + H2O = quercetin + beta-D-glucose. It catalyses the reaction quercetin 3-O-beta-D-glucoside + H2O = quercetin + beta-D-glucose. It carries out the reaction kaempferol 3-O-beta-D-glucoside + H2O = kaempferol + beta-D-glucose. The enzyme catalyses luteolin 7-O-beta-D-glucoside + H2O = luteolin + beta-D-glucose. The catalysed reaction is luteolin 4'-O-beta-D-glucoside + H2O = luteolin + beta-D-glucose. It catalyses the reaction (2S)-naringenin 7-O-beta-D-glucoside + H2O = (2S)-naringenin + beta-D-glucose. It carries out the reaction eriodictyol-7-O-beta-D-glucoside + H2O = (S)-eriodictyol + beta-D-glucose. The enzyme catalyses apigenin 7-O-beta-D-glucoside + H2O = apigenin + beta-D-glucose. The catalysed reaction is daidzein 7-O-beta-D-glucoside + H2O = daidzein + beta-D-glucose + H(+). It catalyses the reaction genistein 7-O-beta-D-glucoside + H2O = genistein + beta-D-glucose. It carries out the reaction a beta-D-galactosyl-N-acylsphingosine + H2O = a ceramide + beta-D-galactose.. The enzyme catalyses beta-D-glucosyl-(1&lt;-&gt;1')-N-hexadecanoylsphing-4-enine + H2O = N-hexadecanoylsphing-4-enine + beta-D-glucose. The catalysed reaction is beta-D-galactosyl-(1&lt;-&gt;1')-N-hexadecanoylsphing-4-enine + H2O = beta-D-galactose + N-hexadecanoylsphing-4-enine. It catalyses the reaction beta-D-galactosyl-(1&lt;-&gt;1')-N-hexadecanoylsphinganine + H2O = N-hexadecanoylsphinganine + beta-D-galactose. It carries out the reaction beta-D-glucosyl-(1&lt;-&gt;1')-N-hexadecanoylsphinganine + H2O = N-hexadecanoylsphinganine + beta-D-glucose. Its function is as follows. Broad specificity glycosidase of the intestinal brush border membrane that hydrolyzes lactose, the main sugar in mammalian milk, to produce D-glucose and D-galactose. The mature protein is composed of two domains that catalyze the hydrolysis of beta-glucopyranosides and beta-galactopyranosides, with a preference for hydrophilic aglycones (in lactose and cellobiose) for one domain and hydrophobic aglycones (in phlorizin and glycosylceramides) for the other. The sequence is that of Lactase/phlorizin hydrolase from Homo sapiens (Human).